A 40-amino-acid polypeptide reads, in one-letter code: Muscarinic m1-toxin3 (40 aa).

C3 and C24 form a disulfide bridge.

Belongs to the three-finger toxin family. Short-chain subfamily. Aminergic toxin sub-subfamily. In terms of assembly, monomer. In terms of processing, contains 4 disulfide bonds. In terms of tissue distribution, expressed by the venom gland.

Its subcellular location is the secreted. Functionally, binds irreversibly and specifically to M1 (CHRM1) muscarinic acetylcholine receptors, blocking further binding of antagonists and preventing the action of agonists. This is Muscarinic m1-toxin3 from Dendroaspis angusticeps (Eastern green mamba).